The sequence spans 428 residues: Succinyl-CoA--L-malate CoA-transferase alpha subunit (428 aa).

Residues 1 to 31 are disordered; sequence MPPTGEEPSGHAESKPPASDPMSTPGTGQEQ. Residues 21–31 are compositionally biased toward polar residues; that stretch reads PMSTPGTGQEQ. D200 functions as the Nucleophile in the catalytic mechanism.

Belongs to the CoA-transferase III family. As to quaternary structure, forms a large complex composed of six heterodimers (alpha, beta).

The enzyme catalyses succinyl-CoA + (S)-malate = (S)-malyl-CoA + succinate. It catalyses the reaction (3S)-citramalate + succinyl-CoA = (3S)-citramalyl-CoA + succinate. Functionally, involved in the 3-hydroxypropionate cycle used for autotrophic carbon dioxide fixation. Catalyzes the transfer of CoA moiety from succinyl-CoA to L-malate to yield L-malyl-CoA. It is highly specific for succinyl-CoA as the CoA donor, however it can accept L-citramalate instead of L-malate as the CoA acceptor. The sequence is that of Succinyl-CoA--L-malate CoA-transferase alpha subunit (smtA) from Chloroflexus aurantiacus.